A 231-amino-acid polypeptide reads, in one-letter code: (S)-2-haloacid dehalogenase 4A (231 aa).

D11 acts as the Nucleophile in catalysis. An (S)-2-haloacid-binding positions include 12–13 (AY), R42, and 119–120 (SN). The tract at residues 176–181 (SSNAWD) is important for catalytic activity.

This sequence belongs to the HAD-like hydrolase superfamily. S-2-haloalkanoic acid dehalogenase family.

The catalysed reaction is an (S)-2-haloacid + H2O = a (2R)-2-hydroxycarboxylate + a halide anion + H(+). It catalyses the reaction (S)-2-chloropropanoate + H2O = (R)-lactate + chloride + H(+). Catalyzes the hydrolytic dehalogenation of small (S)-2-haloalkanoic acids to yield the corresponding (R)-2-hydroxyalkanoic acids. Acts on acids of short chain lengths, C(2) to C(4), with inversion of configuration at C-3. Active with 2-halogenated carboxylic acids and converts only the S-isomer (or L-isomer) of 2-chloropropionic acid with inversion of configuration to produce R-lactate (or D-isomer). The polypeptide is (S)-2-haloacid dehalogenase 4A (Burkholderia cepacia (Pseudomonas cepacia)).